The primary structure comprises 967 residues: E3 ubiquitin-protein ligase arkadia-C (967 aa).

2 disordered regions span residues 57-175 (QQID…VSSL) and 193-276 (RKRF…SGGM). The segment covering 112–131 (SSFSDCISSPSSSSHFGDSD) has biased composition (low complexity). Polar residues predominate over residues 149 to 160 (GINSTPRTQSAR). Residues 232-251 (SSSSSSENDLSSESSSSSST) are compositionally biased toward low complexity. The SUMO interaction motif 1 (SIM) motif lies at 280-284 (VVVIE). The SUMO interaction motif 2 (SIM) signature appears at 305–311 (EVEIVTV). Positions 321-343 (LGHPRSHWGQNSQSGRTQEHRTR) are disordered. The short motif at 360-364 (VVDLT) is the SUMO interaction motif 3 (SIM) element. Disordered regions lie at residues 368-452 (DDPT…MPRL), 482-548 (HSHH…LSNN), 629-657 (LHHQTSACPHSNPASQPPPPPPPPPMDYV), and 669-689 (PSLTSTHAVPPPPPSHHLSTA). Low complexity predominate over residues 385 to 395 (VSTVSSNTSTS). Positions 482–498 (HSHHFPHHHHHHHHHSS) are enriched in basic residues. The segment covering 629-642 (LHHQTSACPHSNPA) has biased composition (polar residues). The span at 643 to 654 (SQPPPPPPPPPM) shows a compositional bias: pro residues. A ubiquitin binding region spans residues 880–882 (YPH). Residues C915 and C918 each contribute to the Zn(2+) site. The RING-type; atypical zinc-finger motif lies at 915-956 (CTICLSILEEGEDVRRLPCMHLFHQVCVDQWLITNKKCPICR). Positions 930–934 (RLPCM) are ubiquitin binding. 2 residues coordinate Zn(2+): H938 and C941.

The protein belongs to the Arkadia family. In terms of assembly, monomer.

It is found in the nucleus. The protein resides in the cytoplasm. It localises to the PML body. It catalyses the reaction S-ubiquitinyl-[E2 ubiquitin-conjugating enzyme]-L-cysteine + [acceptor protein]-L-lysine = [E2 ubiquitin-conjugating enzyme]-L-cysteine + N(6)-ubiquitinyl-[acceptor protein]-L-lysine.. The protein operates within protein modification; protein ubiquitination. With respect to regulation, binds free ubiquitin non-covalently via its RING-type zinc finger. Ubiquitin-binding leads to enhance the E3 ubiquitin-protein ligase activity by stabilizing the ubiquitin-conjugating enzyme E2 (donor ubiquitin) in the 'closed' conformation and activating ubiquitin transfer. Functionally, E3 ubiquitin-protein ligase required for mesoderm patterning during embryonic development. Acts as an enhancer of the transcriptional responses of the smad2/smad3 effectors, which are activated downstream of BMP. Acts by mediating ubiquitination and degradation of SMAD inhibitors such as smad7, inducing their proteasomal degradation and thereby enhancing the transcriptional activity of TGF-beta and BMP. Specifically binds polysumoylated chains via SUMO interaction motifs (SIMs) and mediates ubiquitination of sumoylated substrates. The regulation of the BMP-SMAD signaling is however independent of sumoylation and is not dependent of SUMO interaction motifs (SIMs). In Xenopus laevis (African clawed frog), this protein is E3 ubiquitin-protein ligase arkadia-C (rnf111-c).